Here is a 528-residue protein sequence, read N- to C-terminus: PH domain-containing protein DDB_G0267786 (528 aa).

The PH domain maps to 59 to 180 (SDVFSGYLVK…WIEIFKTCCR (122 aa)).

This is PH domain-containing protein DDB_G0267786 from Dictyostelium discoideum (Social amoeba).